The chain runs to 467 residues: Probable circularly permuted 1,3-beta-glucanase TOS1 (467 aa).

Residues 1–21 (MKFSSTTLLAGLSSLTATVSA) form the signal peptide. The span at 158–172 (PAVSSAAADDNANSG) shows a compositional bias: low complexity. 2 disordered regions span residues 158–187 (PAVS…GYGS) and 200–223 (SDIS…TASV). The segment covering 173–185 (SGSGSSAGSGSGY) has biased composition (gly residues). Residues 203–222 (STKSAPTSTSAQPSSSETAS) show a composition bias toward low complexity. Residues 374 to 379 (ELDLFE) carry the ExDxxE motif motif. The tract at residues 391 to 413 (HLHDGQGSSQNSNNGGGGSQDYF) is disordered.

This sequence belongs to the PGA52 family. Cleaved by KEX2 in vitro.

The protein localises to the secreted. It carries out the reaction Hydrolysis of (1-&gt;3)-beta-D-glucosidic linkages in (1-&gt;3)-beta-D-glucans.. Probable circularly permuted 1,3-beta-glucanase involved in cell wall modification through beta-1,3-glucan network alterations such as increased branching or remodeling. Plays a role in engulfment by host macrophages. This is Probable circularly permuted 1,3-beta-glucanase TOS1 from Candida albicans (strain SC5314 / ATCC MYA-2876) (Yeast).